The following is a 508-amino-acid chain: MIVVLDFGSQYTQLIARRLRESGIYAEIVPFFESTENIQKKAPKGLILSGGPASVYAKDAYTPSEKIFDLNLPILGICYGMQYLVDFFGGAVACANEQEFGKAALEIIQDSVIFKGVKAKSLVWMSHMDKVITLPKGFTTIAKSPNSLHCAIESGKVFGLQFHPEVIQSEEGGKILENFALLVCGCEKTWGMQNFAQKEMTRLKEKISDARVLCAVSGGVDSTVVATLLHRAIKDNLIAVFVDHGLLRKNEKEKVQAMFKDLQIPLNTIDAKEIFLSKLKGVSEPELKRKIIGETFIEVFEKEAKKHHLKGKIEFLAQGTLYPDVIESVSVKGPSKVIKSHHNVGGLPEWMDFKLIEPLRELFKDEVRLLGKELGVSQDFLMRHPFPGPGLAVRILGEVSESKIKCLQEADFIFIEELKKANLYDKVWQAFCVLLNAHSVGVMGDNRTYENAICLRAVDASDGMTASFSHLGHSFLEKVSNRITNEVSGINRVVYDITSKPPGTIEWE.

The Glutamine amidotransferase type-1 domain maps to 1-189 (MIVVLDFGSQ…ALLVCGCEKT (189 aa)). Cys78 serves as the catalytic Nucleophile. Residues His163 and Glu165 contribute to the active site. Positions 190–383 (WGMQNFAQKE…LGVSQDFLMR (194 aa)) constitute a GMPS ATP-PPase domain. 217–223 (SGGVDST) is an ATP binding site.

In terms of assembly, homodimer.

The enzyme catalyses XMP + L-glutamine + ATP + H2O = GMP + L-glutamate + AMP + diphosphate + 2 H(+). The protein operates within purine metabolism; GMP biosynthesis; GMP from XMP (L-Gln route): step 1/1. Functionally, catalyzes the synthesis of GMP from XMP. The protein is GMP synthase [glutamine-hydrolyzing] of Helicobacter acinonychis (strain Sheeba).